The chain runs to 997 residues: Bifunctional purine synthesis protein purC/E (997 aa).

An SAICAR synthetase region spans residues 1 to 305; that stretch reads MTTAINNNIV…NNNNNNNNNS (305 aa). 3 stretches are compositionally biased toward low complexity: residues 294–323, 342–355, and 524–536; these read LNNNNNNNNNNSNNNNNNTSSTSRSNSLPN, QQQSGVGNNNNVNS, and TSTSTTTTTTTTS. 4 disordered regions span residues 294–355, 518–538, 550–569, and 575–604; these read LNNN…NVNS, IPVDNPTSTSTTTTTTTTSNA, INSNTSSHNNNQQQQQQQQT, and PTIINTPTPVRSSVSRSQSPLPSGNGSSII. Residues 305–997 form an AIR carboxylase region; it reads SNNNNNNTSS…GRKMGHVTQQ (693 aa). The segment covering 575 to 597 has biased composition (low complexity); that stretch reads PTIINTPTPVRSSVSRSQSPLPS. ATP contacts are provided by residues R728, K768, Q779, 807-810, and E815; that span reads EQYI. Positions 732 to 927 constitute an ATP-grasp domain; the sequence is KTFIQSLDIP…QFEQLIRCVC (196 aa). Residues E880 and E898 each coordinate Mg(2+). 897-898 contributes to the ATP binding site; the sequence is NE.

In the N-terminal section; belongs to the SAICAR synthetase family. It in the C-terminal section; belongs to the AIR carboxylase family. Class I subfamily. Requires Mg(2+) as cofactor. Mn(2+) serves as cofactor.

The catalysed reaction is 5-amino-1-(5-phospho-D-ribosyl)imidazole-4-carboxylate + L-aspartate + ATP = (2S)-2-[5-amino-1-(5-phospho-beta-D-ribosyl)imidazole-4-carboxamido]succinate + ADP + phosphate + 2 H(+). It catalyses the reaction 5-amino-1-(5-phospho-D-ribosyl)imidazole-4-carboxylate + H(+) = 5-amino-1-(5-phospho-beta-D-ribosyl)imidazole + CO2. Its pathway is purine metabolism; IMP biosynthesis via de novo pathway; 5-amino-1-(5-phospho-D-ribosyl)imidazole-4-carboxylate from 5-amino-1-(5-phospho-D-ribosyl)imidazole (carboxylase route): step 1/1. The protein operates within purine metabolism; IMP biosynthesis via de novo pathway; 5-amino-1-(5-phospho-D-ribosyl)imidazole-4-carboxamide from 5-amino-1-(5-phospho-D-ribosyl)imidazole-4-carboxylate: step 1/2. Its function is as follows. Bifunctional enzyme involved in de novo IMP synthesis, an essential step for de nove purine synthesis. In Dictyostelium discoideum (Social amoeba), this protein is Bifunctional purine synthesis protein purC/E (purC/E).